The sequence spans 138 residues: Basic phospholipase A2 PLA-N (138 aa).

The N-terminal stretch at M1 to G16 is a signal peptide. Cystine bridges form between C42–C131, C44–C60, C59–C111, C65–C138, C66–C104, C73–C97, and C91–C102. Residues Y43, G45, and G47 each coordinate Ca(2+). The active site involves H63. Residue D64 coordinates Ca(2+). D105 is an active-site residue.

It belongs to the phospholipase A2 family. Group II subfamily. D49 sub-subfamily. The cofactor is Ca(2+). As to expression, expressed by the venom gland.

The protein resides in the secreted. It catalyses the reaction a 1,2-diacyl-sn-glycero-3-phosphocholine + H2O = a 1-acyl-sn-glycero-3-phosphocholine + a fatty acid + H(+). Its function is as follows. Snake venom phospholipase A2 (PLA2) that displays edema-inducing activities, as well as presynaptic neurotoxicity and myotoxicity. PLA2 catalyzes the calcium-dependent hydrolysis of the 2-acyl groups in 3-sn-phosphoglycerides. The polypeptide is Basic phospholipase A2 PLA-N (Protobothrops flavoviridis (Habu)).